The sequence spans 870 residues: Adhesin AWP1 (870 aa).

The signal sequence occupies residues 1–18 (MSLITIFAFFIKATLVLS). N224 carries N-linked (GlcNAc...) asparagine glycosylation. The cysteines at positions 284 and 322 are disulfide-linked. Residues 329–835 (ITPSSSVEPS…TRQTSVIAPG (507 aa)) form a disordered region. Over residues 331-566 (PSSSVEPSSS…SSSAVVPTSS (236 aa)) the composition is skewed to low complexity. The segment covering 567–576 (AGGGNGGDNG) has biased composition (gly residues). The segment covering 577–641 (QPGADGQPGA…PGAAGQPGAA (65 aa)) has biased composition (low complexity). Over residues 642–652 (GQPGAGSGGGS) the composition is skewed to gly residues. An N-linked (GlcNAc...) asparagine glycan is attached at N669. Residues 675 to 721 (SGTGNGQAGSGQAGSGQVGSGQAGAGQAGSGQAGAGQAGSGQAGAGQ) are compositionally biased toward gly residues. Polar residues-rich tracts occupy residues 724–735 (LDNTASGQSEGG) and 792–801 (GSGTDQSSGR).

The protein localises to the secreted. It is found in the cell wall. May play a role in cell adhesion. The polypeptide is Adhesin AWP1 (Candida glabrata (strain ATCC 2001 / BCRC 20586 / JCM 3761 / NBRC 0622 / NRRL Y-65 / CBS 138) (Yeast)).